The following is a 598-amino-acid chain: Aspartate--tRNA(Asp/Asn) ligase (598 aa).

Residue Glu-177 coordinates L-aspartate. The tract at residues 201-204 is aspartate; that stretch reads QLFK. Arg-223 contributes to the L-aspartate binding site. ATP-binding positions include 223 to 225 and Gln-232; that span reads RDE. L-aspartate is bound at residue His-456. Residue Glu-493 participates in ATP binding. Arg-500 contacts L-aspartate. An ATP-binding site is contributed by 545 to 548; sequence GLDR.

This sequence belongs to the class-II aminoacyl-tRNA synthetase family. Type 1 subfamily. In terms of assembly, homodimer.

It is found in the cytoplasm. It carries out the reaction tRNA(Asx) + L-aspartate + ATP = L-aspartyl-tRNA(Asx) + AMP + diphosphate. In terms of biological role, aspartyl-tRNA synthetase with relaxed tRNA specificity since it is able to aspartylate not only its cognate tRNA(Asp) but also tRNA(Asn). Reaction proceeds in two steps: L-aspartate is first activated by ATP to form Asp-AMP and then transferred to the acceptor end of tRNA(Asp/Asn). The protein is Aspartate--tRNA(Asp/Asn) ligase of Prochlorococcus marinus (strain MIT 9301).